The primary structure comprises 345 residues: Phosphoribosylformylglycinamidine cyclo-ligase (345 aa).

It belongs to the AIR synthase family.

Its subcellular location is the cytoplasm. The enzyme catalyses 2-formamido-N(1)-(5-O-phospho-beta-D-ribosyl)acetamidine + ATP = 5-amino-1-(5-phospho-beta-D-ribosyl)imidazole + ADP + phosphate + H(+). It participates in purine metabolism; IMP biosynthesis via de novo pathway; 5-amino-1-(5-phospho-D-ribosyl)imidazole from N(2)-formyl-N(1)-(5-phospho-D-ribosyl)glycinamide: step 2/2. The protein is Phosphoribosylformylglycinamidine cyclo-ligase of Cronobacter sakazakii (strain ATCC BAA-894) (Enterobacter sakazakii).